Here is a 237-residue protein sequence, read N- to C-terminus: UPF0173 metal-dependent hydrolase HQ_3368A (237 aa).

This sequence belongs to the UPF0173 family.

This chain is UPF0173 metal-dependent hydrolase HQ_3368A, found in Haloquadratum walsbyi (strain DSM 16790 / HBSQ001).